The chain runs to 43 residues: Protein PsbN (43 aa).

The chain crosses the membrane as a helical span at residues 7-27 (LIVAIAAVTICITAFAIYTAF).

It belongs to the PsbN family.

The protein resides in the cellular thylakoid membrane. Its function is as follows. May play a role in photosystem I and II biogenesis. This is Protein PsbN from Synechococcus sp. (strain JA-2-3B'a(2-13)) (Cyanobacteria bacterium Yellowstone B-Prime).